Reading from the N-terminus, the 289-residue chain is Acetyl-coenzyme A carboxylase carboxyl transferase subunit beta (289 aa).

In terms of domain architecture, CoA carboxyltransferase N-terminal spans 28-289; sequence VMTKCPKCKK…QGGEMAVWQS (262 aa). The Zn(2+) site is built by Cys32, Cys35, Cys51, and Cys54. Residues 32–54 form a C4-type zinc finger; sequence CPKCKKIMYTKEVLKNLKVCVNC.

The protein belongs to the AccD/PCCB family. In terms of assembly, acetyl-CoA carboxylase is a heterohexamer composed of biotin carboxyl carrier protein (AccB), biotin carboxylase (AccC) and two subunits each of ACCase subunit alpha (AccA) and ACCase subunit beta (AccD). Requires Zn(2+) as cofactor.

Its subcellular location is the cytoplasm. It catalyses the reaction N(6)-carboxybiotinyl-L-lysyl-[protein] + acetyl-CoA = N(6)-biotinyl-L-lysyl-[protein] + malonyl-CoA. Its pathway is lipid metabolism; malonyl-CoA biosynthesis; malonyl-CoA from acetyl-CoA: step 1/1. In terms of biological role, component of the acetyl coenzyme A carboxylase (ACC) complex. Biotin carboxylase (BC) catalyzes the carboxylation of biotin on its carrier protein (BCCP) and then the CO(2) group is transferred by the transcarboxylase to acetyl-CoA to form malonyl-CoA. The chain is Acetyl-coenzyme A carboxylase carboxyl transferase subunit beta from Bacillus thuringiensis subsp. konkukian (strain 97-27).